The following is a 448-amino-acid chain: tRNA(Ile)-lysidine synthase (448 aa).

25-30 lines the ATP pocket; it reads SGGSDS.

This sequence belongs to the tRNA(Ile)-lysidine synthase family.

It is found in the cytoplasm. The enzyme catalyses cytidine(34) in tRNA(Ile2) + L-lysine + ATP = lysidine(34) in tRNA(Ile2) + AMP + diphosphate + H(+). Functionally, ligates lysine onto the cytidine present at position 34 of the AUA codon-specific tRNA(Ile) that contains the anticodon CAU, in an ATP-dependent manner. Cytidine is converted to lysidine, thus changing the amino acid specificity of the tRNA from methionine to isoleucine. The sequence is that of tRNA(Ile)-lysidine synthase from Brucella abortus (strain S19).